Reading from the N-terminus, the 181-residue chain is MNQKAVILDEQAIRRALTRIAHEMIERNKGMNDCILVGIKTRGIYLAKRLAERIEQIEGNPVTVGEIDITLYRDDLTKKTSNEEPLVKGADIPADITDQKVIVVDDVLYTGRTVRAAMDALVDVGRPSSIQLAVLVDRGHRELPIRADYIGKNIPTSKAEKVMVQLSEVDQTDMVAIYENE.

The PRPP-binding motif lies at 101–113 (VIVVDDVLYTGRT).

It belongs to the purine/pyrimidine phosphoribosyltransferase family. PyrR subfamily. In terms of assembly, homodimer and homohexamer; in equilibrium.

It carries out the reaction UMP + diphosphate = 5-phospho-alpha-D-ribose 1-diphosphate + uracil. Functionally, regulates transcriptional attenuation of the pyrimidine nucleotide (pyr) operon by binding in a uridine-dependent manner to specific sites on pyr mRNA. This disrupts an antiterminator hairpin in the RNA and favors formation of a downstream transcription terminator, leading to a reduced expression of downstream genes. Also displays a weak uracil phosphoribosyltransferase activity which is not physiologically significant. The protein is Bifunctional protein PyrR of Bacillus velezensis (strain DSM 23117 / BGSC 10A6 / LMG 26770 / FZB42) (Bacillus amyloliquefaciens subsp. plantarum).